The primary structure comprises 86 residues: Curamycin polyketide synthase acyl carrier protein (86 aa).

Residues 7-86 form the Carrier domain; the sequence is QVTVEELATL…VVNGALASGA (80 aa). Serine 44 carries the O-(pantetheine 4'-phosphoryl)serine modification.

4'-phosphopantetheine is transferred from CoA to a specific serine of the apo-ACP-like protein.

It participates in antibiotic biosynthesis; curamycin biosynthesis. In terms of biological role, acyl carrier protein. This is Curamycin polyketide synthase acyl carrier protein (curE) from Streptomyces cyaneus (Streptomyces curacoi).